Consider the following 408-residue polypeptide: CinA-like protein (408 aa).

Belongs to the CinA family.

This chain is CinA-like protein, found in Anaeromyxobacter dehalogenans (strain 2CP-1 / ATCC BAA-258).